The chain runs to 396 residues: Elongation factor Tu (396 aa).

A tr-type G domain is found at 10 to 206 (KPHVNVGTIG…ALDASIPEPK (197 aa)). Residues 19 to 26 (GHVDHGKT) form a G1 region. 19-26 (GHVDHGKT) serves as a coordination point for GTP. T26 is a binding site for Mg(2+). A G2 region spans residues 60-64 (GITIS). The interval 81–84 (DCPG) is G3. GTP contacts are provided by residues 81-85 (DCPGH) and 136-139 (NKAD). Positions 136 to 139 (NKAD) are G4. A G5 region spans residues 174–176 (SAL).

This sequence belongs to the TRAFAC class translation factor GTPase superfamily. Classic translation factor GTPase family. EF-Tu/EF-1A subfamily. As to quaternary structure, monomer.

Its subcellular location is the cytoplasm. It catalyses the reaction GTP + H2O = GDP + phosphate + H(+). GTP hydrolase that promotes the GTP-dependent binding of aminoacyl-tRNA to the A-site of ribosomes during protein biosynthesis. The chain is Elongation factor Tu from Dichelobacter nodosus (strain VCS1703A).